We begin with the raw amino-acid sequence, 466 residues long: Glutamate decarboxylase beta (466 aa).

The substrate site is built by Thr-62 and Asn-83. Pyridoxal 5'-phosphate-binding positions include 126 to 127, Thr-212, and His-275; that span reads SS. An N6-(pyridoxal phosphate)lysine modification is found at Lys-276. N6-acetyllysine is present on residues Lys-446, Lys-453, and Lys-464.

Belongs to the group II decarboxylase family. As to quaternary structure, homohexamer composed of three dimers. The cofactor is pyridoxal 5'-phosphate.

The catalysed reaction is L-glutamate + H(+) = 4-aminobutanoate + CO2. Its function is as follows. Converts glutamate to gamma-aminobutyrate (GABA), consuming one intracellular proton in the reaction. The gad system helps to maintain a near-neutral intracellular pH when cells are exposed to extremely acidic conditions. The ability to survive transit through the acidic conditions of the stomach is essential for successful colonization of the mammalian host by commensal and pathogenic bacteria. This chain is Glutamate decarboxylase beta (gadB), found in Shigella flexneri.